The primary structure comprises 495 residues: 3-octaprenyl-4-hydroxybenzoate carboxy-lyase (495 aa).

A Mn(2+)-binding site is contributed by asparagine 172. Residues 175-177 (IYR), 189-191 (RWL), and 194-195 (RG) each bind prenylated FMN. A Mn(2+)-binding site is contributed by glutamate 238. Aspartate 287 acts as the Proton donor in catalysis.

The protein belongs to the UbiD family. As to quaternary structure, homohexamer. The cofactor is prenylated FMN. Mn(2+) serves as cofactor.

Its subcellular location is the cell membrane. It catalyses the reaction a 4-hydroxy-3-(all-trans-polyprenyl)benzoate + H(+) = a 2-(all-trans-polyprenyl)phenol + CO2. The protein operates within cofactor biosynthesis; ubiquinone biosynthesis. Its function is as follows. Catalyzes the decarboxylation of 3-octaprenyl-4-hydroxy benzoate to 2-octaprenylphenol, an intermediate step in ubiquinone biosynthesis. This chain is 3-octaprenyl-4-hydroxybenzoate carboxy-lyase, found in Yersinia pestis bv. Antiqua (strain Angola).